A 419-amino-acid polypeptide reads, in one-letter code: MSDEQIDKLVSRLDGALNRLGNVKKDHPLESSSNSKPTHQPKSPAPYRQKIEKLSAEVVDSNPYSRLMALQRMGIVNEYERIREKTVAVVGVGGVGSVVAEMLTRCGIGKLILFDYDKVEIANMNRLFYQPNQAGLSKVEAARDTLIHVNPDVQIEVHNFNITTMDNFDTFVNRIRKGSLTDGKIDLVLSCVDNFEARMAVNMACNEENQIWMESGVSENAVSGHIQYIEPGKTACFACVPPLVVASGIDERTLKRDGVCAASLPTTMAVVAGFLVMNTLKYLLNFGEVSQYVGYNALSDFFPRDSIKPNPYCDDSHCLQRQKEYEEKVANQPVDLEVEVPEEETVVHEDNEWGIELVNESEPSAEQSSSLNAGTGLKFAYEPIKRDAQTELSPAQAATHDFMKSIKDKLVEEAQNKGK.

Residues 18–47 are disordered; the sequence is NRLGNVKKDHPLESSSNSKPTHQPKSPAPY. The span at 30–41 shows a compositional bias: polar residues; sequence ESSSNSKPTHQP. Positions 94, 115, 138, 161, and 194 each coordinate ATP. 2 residues coordinate Zn(2+): cysteine 236 and cysteine 239. Cysteine 260 serves as the catalytic Glycyl thioester intermediate. The Zn(2+) site is built by cysteine 313 and cysteine 318.

It belongs to the ubiquitin-activating E1 family. UBA5 subfamily. In terms of assembly, interacts with ufc-1. Expressed in the intestine.

Its function is as follows. E1-like enzyme which activates ufm-1. Required for interaction between ufm-1 and ufc-1. The sequence is that of Ubiquitin-like modifier-activating enzyme 5 from Caenorhabditis elegans.